We begin with the raw amino-acid sequence, 371 residues long: Queuine tRNA-ribosyltransferase (371 aa).

Asp-89 functions as the Proton acceptor in the catalytic mechanism. Residues 89–93, Asp-143, Gln-185, and Gly-212 contribute to the substrate site; that span reads DSGGF. Residues 243-249 form an RNA binding region; sequence GVGKPED. The active-site Nucleophile is the Asp-262. Residues 267-271 form an RNA binding; important for wobble base 34 recognition region; sequence TRNAR. Zn(2+) is bound by residues Cys-300, Cys-302, Cys-305, and His-331.

The protein belongs to the queuine tRNA-ribosyltransferase family. Homodimer. Within each dimer, one monomer is responsible for RNA recognition and catalysis, while the other monomer binds to the replacement base PreQ1. Zn(2+) serves as cofactor.

It catalyses the reaction 7-aminomethyl-7-carbaguanine + guanosine(34) in tRNA = 7-aminomethyl-7-carbaguanosine(34) in tRNA + guanine. It functions in the pathway tRNA modification; tRNA-queuosine biosynthesis. Functionally, catalyzes the base-exchange of a guanine (G) residue with the queuine precursor 7-aminomethyl-7-deazaguanine (PreQ1) at position 34 (anticodon wobble position) in tRNAs with GU(N) anticodons (tRNA-Asp, -Asn, -His and -Tyr). Catalysis occurs through a double-displacement mechanism. The nucleophile active site attacks the C1' of nucleotide 34 to detach the guanine base from the RNA, forming a covalent enzyme-RNA intermediate. The proton acceptor active site deprotonates the incoming PreQ1, allowing a nucleophilic attack on the C1' of the ribose to form the product. After dissociation, two additional enzymatic reactions on the tRNA convert PreQ1 to queuine (Q), resulting in the hypermodified nucleoside queuosine (7-(((4,5-cis-dihydroxy-2-cyclopenten-1-yl)amino)methyl)-7-deazaguanosine). The sequence is that of Queuine tRNA-ribosyltransferase from Pseudomonas putida (strain ATCC 47054 / DSM 6125 / CFBP 8728 / NCIMB 11950 / KT2440).